A 502-amino-acid chain; its full sequence is Cytochrome P450 3A40 (502 aa).

C443 is a binding site for heme.

It belongs to the cytochrome P450 family. Heme is required as a cofactor.

The protein localises to the endoplasmic reticulum membrane. It is found in the microsome membrane. It catalyses the reaction an organic molecule + reduced [NADPH--hemoprotein reductase] + O2 = an alcohol + oxidized [NADPH--hemoprotein reductase] + H2O + H(+). This Oryzias latipes (Japanese rice fish) protein is Cytochrome P450 3A40 (cyp3a40).